We begin with the raw amino-acid sequence, 116 residues long: Ly-6/neurotoxin-like protein 1 (116 aa).

The N-terminal stretch at 1-20 (MTHLLTVFLVALMGLPVAQA) is a signal peptide. One can recognise a UPAR/Ly6 domain in the interval 21–104 (LECHVCAYNG…GFATPVTLAL (84 aa)). 5 cysteine pairs are disulfide-bonded: Cys23–Cys46, Cys26–Cys33, Cys39–Cys64, Cys68–Cys85, and Cys86–Cys91. Asn92 is lipidated: GPI-anchor amidated asparagine. The propeptide at 93–116 (GAGFATPVTLALVPALLATFWSLL) is removed in mature form.

In terms of assembly, interacts with nAChRs containing alpha-4:beta-2 (CHRNA4:CHRNB2) and alpha-7 (CHRNA7) subunits. Interacts with CHRNA4 probably in the endoplasmic reticulum prior to nAChR pentameric assembly. Interacts with KCNA2/Potassium voltage-gated channel subfamily A member 2. As to expression, expressed in neurons of multiple regions in the CNS, including the cerebral cortex, thalamus, substantia nigra, cerebellum, amygdala and hippocampus. Also expressed in kidney, heart and thymus, but at lower levels than in the brain. Expressed in the primary visual cortex (V1) and the lateral geniculate nucleus (at protein level).

It localises to the cell membrane. Its subcellular location is the cell projection. It is found in the dendrite. The protein resides in the endoplasmic reticulum. Its function is as follows. Acts in different tissues through interaction to nicotinic acetylcholine receptors (nAChRs). The proposed role as modulator of nAChR activity seems to be dependent on the nAChR subtype and stoichiometry, and to involve an effect on nAChR trafficking and its cell surface expression, and on single channel properties of the nAChR inserted in the plasma membrane. Modulates functional properties of nicotinic acetylcholine receptors (nAChRs) to prevent excessive excitation, and hence neurodegeneration. Enhances desensitization by increasing both the rate and extent of desensitization of alpha-4:beta-2-containing nAChRs and slowing recovery from desensitization. Promotes large amplitude ACh-evoked currents through alpha-4:beta-2 nAChRs. Is involved in regulation of the nAChR pentameric assembly in the endoplasmic reticulum. Shifts stoichiometry from high sensitivity alpha-4(2):beta-2(3) to low sensitivity alpha-4(3):beta-2(2) nAChR. In vitro modulates alpha-3:beta-4-containing nAChRs. Reduces cell surface expression of (alpha-3:beta-4)(2):beta-4 and (alpha-3:beta-4)(2):alpha-5 nAChRs suggesting an interaction with nAChR alpha-3(-):(+)beta-4 subunit interfaces and an allosteric mode. Corresponding single channel effects characterized by decreased unitary conductance, altered burst proportions and enhanced desensitization/inactivation seem to depend on nAChR alpha:alpha subunit interfaces and are greater in (alpha-3:beta-2)(2):alpha-3 when compared to (alpha-3:beta-2)(2):alpha-5 nAChRs. Prevents plasticity in the primary visual cortex late in life. The sequence is that of Ly-6/neurotoxin-like protein 1 from Mus musculus (Mouse).